Consider the following 429-residue polypeptide: D-amino acid dehydrogenase (429 aa).

3–17 contacts FAD; that stretch reads VLILGSGVIGVTSAW.

This sequence belongs to the DadA oxidoreductase family. Requires FAD as cofactor.

It carries out the reaction a D-alpha-amino acid + A + H2O = a 2-oxocarboxylate + AH2 + NH4(+). Its pathway is amino-acid degradation; D-alanine degradation; NH(3) and pyruvate from D-alanine: step 1/1. Its function is as follows. Oxidative deamination of D-amino acids. This is D-amino acid dehydrogenase from Xanthomonas euvesicatoria pv. vesicatoria (strain 85-10) (Xanthomonas campestris pv. vesicatoria).